Consider the following 359-residue polypeptide: Phospho-N-acetylmuramoyl-pentapeptide-transferase (359 aa).

Helical transmembrane passes span 3-23, 55-75, 84-104, 120-140, 156-176, 187-207, 231-251, 255-275, 280-300, and 334-354; these read QILI…PVLI, VAIL…GLAL, GLLV…DDLI, TVGI…FGNA, IATV…LVSA, LDGL…LITF, LALV…WNAA, IFMG…LSVT, ILAV…VVQI, and FWLL…GEWL.

Belongs to the glycosyltransferase 4 family. MraY subfamily. The cofactor is Mg(2+).

Its subcellular location is the cell membrane. It carries out the reaction UDP-N-acetyl-alpha-D-muramoyl-L-alanyl-gamma-D-glutamyl-meso-2,6-diaminopimeloyl-D-alanyl-D-alanine + di-trans,octa-cis-undecaprenyl phosphate = di-trans,octa-cis-undecaprenyl diphospho-N-acetyl-alpha-D-muramoyl-L-alanyl-D-glutamyl-meso-2,6-diaminopimeloyl-D-alanyl-D-alanine + UMP. It participates in cell wall biogenesis; peptidoglycan biosynthesis. In terms of biological role, catalyzes the initial step of the lipid cycle reactions in the biosynthesis of the cell wall peptidoglycan: transfers peptidoglycan precursor phospho-MurNAc-pentapeptide from UDP-MurNAc-pentapeptide onto the lipid carrier undecaprenyl phosphate, yielding undecaprenyl-pyrophosphoryl-MurNAc-pentapeptide, known as lipid I. The chain is Phospho-N-acetylmuramoyl-pentapeptide-transferase from Mycobacterium sp. (strain JLS).